A 312-amino-acid chain; its full sequence is Ribosomal RNA small subunit methyltransferase H (312 aa).

Residues 35–37 (GGH), Asp54, Phe81, Asp100, and Gln107 contribute to the S-adenosyl-L-methionine site.

The protein belongs to the methyltransferase superfamily. RsmH family.

The protein localises to the cytoplasm. The catalysed reaction is cytidine(1402) in 16S rRNA + S-adenosyl-L-methionine = N(4)-methylcytidine(1402) in 16S rRNA + S-adenosyl-L-homocysteine + H(+). Functionally, specifically methylates the N4 position of cytidine in position 1402 (C1402) of 16S rRNA. This is Ribosomal RNA small subunit methyltransferase H from Campylobacter jejuni subsp. jejuni serotype O:2 (strain ATCC 700819 / NCTC 11168).